A 571-amino-acid chain; its full sequence is Gag-Pro polyprotein (571 aa).

Gly-2 carries N-myristoyl glycine; by host lipidation. The PPXY motif signature appears at 100–103 (PPPY). 2 repeats span residues 342 to 362 (PPPG…DCPT) and 367 to 387 (PPPG…DCPT). 2 CCHC-type zinc fingers span residues 345–362 (GPCY…DCPT) and 370–387 (GPCP…DCPT). In terms of domain architecture, Peptidase A2 spans 447–525 (ALMLVDTGAE…DKWQILGRDV (79 aa)). Asp-452 serves as the catalytic Protease; shared with dimeric partner.

In terms of assembly, homodimer; the homodimers are part of the immature particles. Interacts with human TSG101 and NEDD4; these interactions are essential for budding and release of viral particles. As to quaternary structure, homodimer; further assembles as homohexamers. Post-translationally, specific enzymatic cleavages by the viral protease yield mature proteins. The polyprotein is cleaved during and after budding, this process is termed maturation. The protease is autoproteolytically processed at its N- and C-termini. Gag polyprotein: Myristoylated. Myristoylation of the matrix (MA) domain mediates the transport and binding of Gag polyproteins to the host plasma membrane and is required for the assembly of viral particles.

It is found in the virion. Functionally, the matrix domain targets Gag, Gag-Pro and Gag-Pro-Pol polyproteins to the plasma membrane via a multipartite membrane binding signal, that includes its myristoylated N-terminus. In terms of biological role, matrix protein. Forms the spherical core of the virus that encapsulates the genomic RNA-nucleocapsid complex. Its function is as follows. Binds strongly to viral nucleic acids and promote their aggregation. Also destabilizes the nucleic acids duplexes via highly structured zinc-binding motifs. Functionally, the aspartyl protease mediates proteolytic cleavages of Gag and Gag-Pol polyproteins during or shortly after the release of the virion from the plasma membrane. Cleavages take place as an ordered, step-wise cascade to yield mature proteins. This process is called maturation. Displays maximal activity during the budding process just prior to particle release from the cell. In Bos taurus (Bovine), this protein is Gag-Pro polyprotein.